A 173-amino-acid polypeptide reads, in one-letter code: Translocon-associated protein subunit delta (173 aa).

A signal peptide spans Met-1–Ala-23. Residues Glu-24–Gly-144 are Lumenal-facing. Cys-26 and Cys-57 form a disulfide bridge. Lys-73 participates in a covalent cross-link: Glycyl lysine isopeptide (Lys-Gly) (interchain with G-Cter in ubiquitin). The helical transmembrane segment at Pro-145–Phe-165 threads the bilayer. At Ser-166–Ala-173 the chain is on the cytoplasmic side.

The protein belongs to the TRAP-delta family. Heterotetramer of TRAP-alpha, TRAP-beta, TRAP-delta and TRAP-gamma.

The protein resides in the endoplasmic reticulum membrane. Its function is as follows. TRAP proteins are part of a complex whose function is to bind calcium to the ER membrane and thereby regulate the retention of ER resident proteins. The sequence is that of Translocon-associated protein subunit delta (Ssr4) from Rattus norvegicus (Rat).